The sequence spans 544 residues: Chaperonin GroEL (544 aa).

Residues Thr30 to Pro33, Lys51, Asp87 to Thr91, Gly415, Asp478 to Ala480, and Asp494 each bind ATP. The interval Pro524 to Tyr544 is disordered. Gly residues predominate over residues Gly535 to Tyr544.

It belongs to the chaperonin (HSP60) family. Forms a cylinder of 14 subunits composed of two heptameric rings stacked back-to-back. Interacts with the co-chaperonin GroES.

Its subcellular location is the cytoplasm. The enzyme catalyses ATP + H2O + a folded polypeptide = ADP + phosphate + an unfolded polypeptide.. Functionally, together with its co-chaperonin GroES, plays an essential role in assisting protein folding. The GroEL-GroES system forms a nano-cage that allows encapsulation of the non-native substrate proteins and provides a physical environment optimized to promote and accelerate protein folding. The chain is Chaperonin GroEL from Methylacidiphilum infernorum (isolate V4) (Methylokorus infernorum (strain V4)).